The primary structure comprises 385 residues: Probable tRNA sulfurtransferase (385 aa).

The region spanning asparagine 57–lysine 161 is the THUMP domain. ATP contacts are provided by residues methionine 181 to leucine 182, tyrosine 206 to tyrosine 207, arginine 263, glycine 285, and glutamine 294.

Belongs to the ThiI family.

It is found in the cytoplasm. It carries out the reaction [ThiI sulfur-carrier protein]-S-sulfanyl-L-cysteine + a uridine in tRNA + 2 reduced [2Fe-2S]-[ferredoxin] + ATP + H(+) = [ThiI sulfur-carrier protein]-L-cysteine + a 4-thiouridine in tRNA + 2 oxidized [2Fe-2S]-[ferredoxin] + AMP + diphosphate. The enzyme catalyses [ThiS sulfur-carrier protein]-C-terminal Gly-Gly-AMP + S-sulfanyl-L-cysteinyl-[cysteine desulfurase] + AH2 = [ThiS sulfur-carrier protein]-C-terminal-Gly-aminoethanethioate + L-cysteinyl-[cysteine desulfurase] + A + AMP + 2 H(+). The protein operates within cofactor biosynthesis; thiamine diphosphate biosynthesis. In terms of biological role, catalyzes the ATP-dependent transfer of a sulfur to tRNA to produce 4-thiouridine in position 8 of tRNAs, which functions as a near-UV photosensor. Also catalyzes the transfer of sulfur to the sulfur carrier protein ThiS, forming ThiS-thiocarboxylate. This is a step in the synthesis of thiazole, in the thiamine biosynthesis pathway. The sulfur is donated as persulfide by IscS. This chain is Probable tRNA sulfurtransferase, found in Clostridium botulinum (strain Alaska E43 / Type E3).